A 397-amino-acid chain; its full sequence is Acetate kinase (397 aa).

Asn8 is a binding site for Mg(2+). Lys15 provides a ligand contact to ATP. Arg92 serves as a coordination point for substrate. The active-site Proton donor/acceptor is the Asp149. Residues 209-213 (HLGNG), 283-285 (DFR), and 331-335 (GVGEN) contribute to the ATP site. Glu385 is a binding site for Mg(2+).

The protein belongs to the acetokinase family. As to quaternary structure, homodimer. It depends on Mg(2+) as a cofactor. Mn(2+) serves as cofactor.

It localises to the cytoplasm. It carries out the reaction acetate + ATP = acetyl phosphate + ADP. It participates in metabolic intermediate biosynthesis; acetyl-CoA biosynthesis; acetyl-CoA from acetate: step 1/2. Catalyzes the formation of acetyl phosphate from acetate and ATP. Can also catalyze the reverse reaction. The chain is Acetate kinase from Corynebacterium glutamicum (strain ATCC 13032 / DSM 20300 / JCM 1318 / BCRC 11384 / CCUG 27702 / LMG 3730 / NBRC 12168 / NCIMB 10025 / NRRL B-2784 / 534).